The primary structure comprises 572 residues: Putative carbohydrate transport ATP-binding protein MPN_258 (572 aa).

2 consecutive ABC transporter domains span residues 6–253 (FRME…MGKE) and 327–572 (RFIR…LIMQ). 40–47 (GENGAGKS) is an ATP binding site.

The protein belongs to the ABC transporter superfamily.

The protein localises to the cell membrane. Its function is as follows. Part of the ABC transporter complex involved in carbohydrates import. Probably responsible for energy coupling to the transport system. In Mycoplasma pneumoniae (strain ATCC 29342 / M129 / Subtype 1) (Mycoplasmoides pneumoniae), this protein is Putative carbohydrate transport ATP-binding protein MPN_258.